We begin with the raw amino-acid sequence, 447 residues long: N-succinylarginine dihydrolase (447 aa).

Substrate contacts are provided by residues Ala-19–Ser-28, Asn-110, and His-137–Arg-138. Residue Glu-174 is part of the active site. Substrate is bound at residue Arg-212. Residue His-248 is part of the active site. Substrate contacts are provided by Asp-250 and Asn-359. Cys-365 (nucleophile) is an active-site residue.

Belongs to the succinylarginine dihydrolase family. Homodimer.

It catalyses the reaction N(2)-succinyl-L-arginine + 2 H2O + 2 H(+) = N(2)-succinyl-L-ornithine + 2 NH4(+) + CO2. It functions in the pathway amino-acid degradation; L-arginine degradation via AST pathway; L-glutamate and succinate from L-arginine: step 2/5. Catalyzes the hydrolysis of N(2)-succinylarginine into N(2)-succinylornithine, ammonia and CO(2). The sequence is that of N-succinylarginine dihydrolase from Escherichia coli O157:H7.